The chain runs to 160 residues: MSVIKKPDLTDPKLRAKLAKGMGHNYYGEPAWPNDLLYVFPLTMLGTLTCIVGLSVLAPTQLGEPADPFNTPLEILPEWYFFPTFNLLRVLPNKLLGVLAMAAVPLGLITVPFIENVNKFQNPFRRPLASLTFIFGFFTAVWLGIGACVPIDKAISLGFW.

Helical transmembrane passes span 36–56 (LLYVFPLTMLGTLTCIVGLSV), 95–115 (LLGVLAMAAVPLGLITVPFIE), and 131–151 (LTFIFGFFTAVWLGIGACVPI).

Belongs to the cytochrome b family. PetD subfamily. The 4 large subunits of the cytochrome b6-f complex are cytochrome b6, subunit IV (17 kDa polypeptide, petD), cytochrome f and the Rieske protein, while the 4 small subunits are petG, petL, petM and petN. The complex functions as a dimer.

Its subcellular location is the plastid. The protein resides in the chloroplast thylakoid membrane. In terms of biological role, component of the cytochrome b6-f complex, which mediates electron transfer between photosystem II (PSII) and photosystem I (PSI), cyclic electron flow around PSI, and state transitions. This chain is Cytochrome b6-f complex subunit 4, found in Phaeodactylum tricornutum (strain CCAP 1055/1).